Consider the following 901-residue polypeptide: Protein translocase subunit SecA (901 aa).

Residues glutamine 87, 105–109, and aspartate 512 contribute to the ATP site; that span reads GEGKT. The segment at 853–901 is disordered; it reads QMQQLSHQTDENEAAEAIAAQTGDRKVGRNDPCPCGSGKKYKSCHGRLS. Residues cysteine 885, cysteine 887, cysteine 896, and histidine 897 each coordinate Zn(2+). Over residues 891–901 the composition is skewed to basic residues; that stretch reads KKYKSCHGRLS.

The protein belongs to the SecA family. As to quaternary structure, monomer and homodimer. Part of the essential Sec protein translocation apparatus which comprises SecA, SecYEG and auxiliary proteins SecDF-YajC and YidC. Zn(2+) serves as cofactor.

It is found in the cell inner membrane. The protein resides in the cytoplasm. The catalysed reaction is ATP + H2O + cellular proteinSide 1 = ADP + phosphate + cellular proteinSide 2.. In terms of biological role, part of the Sec protein translocase complex. Interacts with the SecYEG preprotein conducting channel. Has a central role in coupling the hydrolysis of ATP to the transfer of proteins into and across the cell membrane, serving both as a receptor for the preprotein-SecB complex and as an ATP-driven molecular motor driving the stepwise translocation of polypeptide chains across the membrane. The sequence is that of Protein translocase subunit SecA from Enterobacter sp. (strain 638).